Reading from the N-terminus, the 2472-residue chain is Spectrin alpha chain, non-erythrocytic 1 (2472 aa).

The residue at position 1 (methionine 1) is an N-acetylmethionine. 9 Spectrin repeats span residues 45–146 (RFQF…IKLL), 150–251 (KLVQ…QGKL), 256–358 (EVQR…ARLN), 361–465 (YRLQ…QYEQ), 468–570 (DLQL…AQLA), 574–676 (HLQQ…KLRE), 679–781 (QQQQ…QKLA), 785–888 (RLQQ…DLED), and 891–969 (QAQQ…ETGK). At serine 587 the chain carries Phosphoserine. Residue lysine 637 is modified to N6-acetyllysine. Residue lysine 803 is modified to N6-acetyllysine. Phosphoserine is present on residues serine 924, serine 982, serine 999, serine 1029, serine 1031, and serine 1041. The SH3 domain maps to 967–1026 (TGKELVLALYDYQEKSPREVTMKKGDILTLLNSTNKDWWKVEVNDRQGFVPAAYVKKLDP). The stretch at 1096–1166 (LFREANELQQ…LESEGLMAEE (71 aa)) is one Spectrin 10 repeat. The residue at position 1176 (tyrosine 1176) is a Phosphotyrosine. Serine 1190, serine 1207, serine 1217, serine 1291, serine 1306, serine 1323, and serine 1338 each carry phosphoserine. One copy of the Spectrin 11 repeat lies at 1233-1336 (HEVQRFHRDA…RADQRKAKLG (104 aa)). 2 Spectrin repeats span residues 1339–1442 (HDLQ…MMLD) and 1446–1549 (ELQL…KLGE). Position 1519 is an N6-acetyllysine (lysine 1519). Phosphoserine is present on residues serine 1550, serine 1557, serine 1578, serine 1615, and serine 1647. Spectrin repeat units lie at residues 1552–1656 (TLQQ…KLKE), 1659–1762 (KQQN…KLNE), 1764–1868 (HRLH…RLEE), 1871–1974 (EYQQ…KLDE), 1978–2081 (FLQF…KLLE), 2092–2194 (LFLT…LELQ), and 2206–2310 (LRQE…NLEQ). Threonine 2020 carries the post-translational modification Phosphothreonine. Residue lysine 2052 is modified to N6-acetyllysine. 3 consecutive EF-hand domains span residues 2323-2358 (EALKEFSMMFKHFDKDKSGRLNHQEFKSCLRSLGYD), 2366-2401 (EPDPEFEAILDTVDPNRDGHVSLQEYMAFMISRETE), and 2404-2439 (KSSEEIESAFRALSSEGKPYVTKEELYQNLTREQAD). Positions 2336, 2338, 2340, 2342, 2347, 2379, 2381, 2383, 2385, and 2390 each coordinate Ca(2+). Residue lysine 2421 is modified to N6-acetyllysine.

Belongs to the spectrin family. Like erythrocyte spectrin, the spectrin-like proteins are capable of forming dimers which can further associate to tetramers. Interacts (via C-terminal spectrin repeats) with TRPC4. Interacts with CALM and EMD. Interacts with isoform 1 of ACP1. Identified in a complex with ACTN4, CASK, IQGAP1, MAGI2, NPHS1 and SPTBN1. Interacts with SHANK3 (via ANK repeats). Interacts with CLN3; this interaction regulates the fodrin localization at the plasma membrane. Post-translationally, phosphorylation of Tyr-1176 decreases sensitivity to cleavage by calpain in vitro.

It is found in the cytoplasm. Its subcellular location is the cytoskeleton. The protein localises to the cell cortex. Its function is as follows. Fodrin, which seems to be involved in secretion, interacts with calmodulin in a calcium-dependent manner and is thus candidate for the calcium-dependent movement of the cytoskeleton at the membrane. This is Spectrin alpha chain, non-erythrocytic 1 (SPTAN1) from Homo sapiens (Human).